The chain runs to 167 residues: Putative NADH-quinone oxidoreductase subunit B 2 (167 aa).

This sequence belongs to the complex I 20 kDa subunit family. NDH-1 is composed of 14 different subunits. Subunits NuoB, C, D, E, F, and G constitute the peripheral sector of the complex.

It is found in the cell inner membrane. The catalysed reaction is a quinone + NADH + 5 H(+)(in) = a quinol + NAD(+) + 4 H(+)(out). Functionally, NDH-1 shuttles electrons from NADH, via FMN and iron-sulfur (Fe-S) centers, to quinones in the respiratory chain. Couples the redox reaction to proton translocation (for every two electrons transferred, four hydrogen ions are translocated across the cytoplasmic membrane), and thus conserves the redox energy in a proton gradient. This chain is Putative NADH-quinone oxidoreductase subunit B 2, found in Burkholderia pseudomallei (strain 1710b).